Consider the following 333-residue polypeptide: Tubulin alpha chain (333 aa).

Residues Ser-48, Gly-52, Thr-53, Thr-88, Asn-115, and Asn-137 each contribute to the GTP site.

It belongs to the tubulin family. As to quaternary structure, dimer of alpha and beta chains. A typical microtubule is a hollow water-filled tube with an outer diameter of 25 nm and an inner diameter of 15 nM. Alpha-beta heterodimers associate head-to-tail to form protofilaments running lengthwise along the microtubule wall with the beta-tubulin subunit facing the microtubule plus end conferring a structural polarity. Microtubules usually have 13 protofilaments but different protofilament numbers can be found in some organisms and specialized cells. It depends on Mg(2+) as a cofactor. Post-translationally, undergoes a tyrosination/detyrosination cycle, the cyclic removal and re-addition of a C-terminal tyrosine residue by the enzymes tubulin tyrosine carboxypeptidase (TTCP) and tubulin tyrosine ligase (TTL), respectively.

It localises to the cytoplasm. The protein resides in the cytoskeleton. It carries out the reaction GTP + H2O = GDP + phosphate + H(+). Its function is as follows. Tubulin is the major constituent of microtubules, a cylinder consisting of laterally associated linear protofilaments composed of alpha- and beta-tubulin heterodimers. Microtubules grow by the addition of GTP-tubulin dimers to the microtubule end, where a stabilizing cap forms. Below the cap, tubulin dimers are in GDP-bound state, owing to GTPase activity of alpha-tubulin. The protein is Tubulin alpha chain (tuba) of Dictyostelium purpureum (Slime mold).